The following is a 328-amino-acid chain: DNA-directed RNA polymerase subunit alpha (328 aa).

The interval 1-235 (MQGSVTEFLK…EQLDAFVDLR (235 aa)) is alpha N-terminal domain (alpha-NTD). The alpha C-terminal domain (alpha-CTD) stretch occupies residues 249-328 (FDPILLRPVD…ENWPPASLAE (80 aa)).

This sequence belongs to the RNA polymerase alpha chain family. As to quaternary structure, homodimer. The RNAP catalytic core consists of 2 alpha, 1 beta, 1 beta' and 1 omega subunit. When a sigma factor is associated with the core the holoenzyme is formed, which can initiate transcription.

The enzyme catalyses RNA(n) + a ribonucleoside 5'-triphosphate = RNA(n+1) + diphosphate. Functionally, DNA-dependent RNA polymerase catalyzes the transcription of DNA into RNA using the four ribonucleoside triphosphates as substrates. The sequence is that of DNA-directed RNA polymerase subunit alpha from Pseudoalteromonas translucida (strain TAC 125).